A 440-amino-acid polypeptide reads, in one-letter code: 2-phosphinomethylmalate synthase (440 aa).

Residues 39–313 (VWLSETTHRD…GARVNLPAVN (275 aa)) enclose the Pyruvate carboxyltransferase domain.

The protein belongs to the alpha-IPM synthase/homocitrate synthase family. In terms of assembly, homodimer. The cofactor is Mn(2+). Requires Co(2+) as cofactor.

It carries out the reaction 3-(hydrohydroxyphosphoryl)pyruvate + acetyl-CoA + H2O = phosphinomethylmalate + CoA + H(+). It participates in secondary metabolite biosynthesis; bialaphos biosynthesis. Its activity is regulated as follows. Strongly inhibited by p-chloromercuribenzoate (pCMB), iodoacetamide (IA) and EDTA. Involved in the biosynthesis of phosphinothricin tripeptide (PTT), also known as bialaphos (BA), a natural-product antibiotic and potent herbicide. Catalyzes the condensation berween phosphinopyruvic acid (PPA), an analog of oxalacetic acid, and acetyl-CoA to form R-2-phosphinomethylmalic acid (PMM). Can also act on oxaloacetate, but shows no activity when acetyl-CoA is substituted by propionyl-CoA or butyryl-CoA. The protein is 2-phosphinomethylmalate synthase of Streptomyces hygroscopicus.